A 458-amino-acid polypeptide reads, in one-letter code: Mannan endo-1,6-alpha-mannosidase DFG5 (458 aa).

An N-terminal signal peptide occupies residues 1 to 26 (MIVNISAKMILSICFTFLSFFKATHA). N-linked (GlcNAc...) asparagine glycans are attached at residues Asn89, Asn114, Asn138, Asn208, Asn231, Asn245, Asn270, Asn273, and Asn417. A disordered region spans residues 399–418 (PYKEDNGGTSKGDANAGMNS). Gly437 carries the GPI-anchor amidated glycine lipid modification. Positions 438-458 (AAIITAVILSVLTGGAVWMLF) are cleaved as a propeptide — removed in mature form.

Belongs to the glycosyl hydrolase 76 family. N-glycosylated.

It is found in the cell membrane. The catalysed reaction is Random hydrolysis of (1-&gt;6)-alpha-D-mannosidic linkages in unbranched (1-&gt;6)-mannans.. Functionally, required for normal synthesis of the cell wall. The sequence is that of Mannan endo-1,6-alpha-mannosidase DFG5 (DFG5) from Saccharomyces cerevisiae (strain ATCC 204508 / S288c) (Baker's yeast).